The sequence spans 582 residues: 2-succinyl-5-enolpyruvyl-6-hydroxy-3-cyclohexene-1-carboxylate synthase (582 aa).

Belongs to the TPP enzyme family. MenD subfamily. Homodimer. Mg(2+) serves as cofactor. Mn(2+) is required as a cofactor. Requires thiamine diphosphate as cofactor.

The enzyme catalyses isochorismate + 2-oxoglutarate + H(+) = 5-enolpyruvoyl-6-hydroxy-2-succinyl-cyclohex-3-ene-1-carboxylate + CO2. It participates in quinol/quinone metabolism; 1,4-dihydroxy-2-naphthoate biosynthesis; 1,4-dihydroxy-2-naphthoate from chorismate: step 2/7. It functions in the pathway quinol/quinone metabolism; menaquinone biosynthesis. In terms of biological role, catalyzes the thiamine diphosphate-dependent decarboxylation of 2-oxoglutarate and the subsequent addition of the resulting succinic semialdehyde-thiamine pyrophosphate anion to isochorismate to yield 2-succinyl-5-enolpyruvyl-6-hydroxy-3-cyclohexene-1-carboxylate (SEPHCHC). The polypeptide is 2-succinyl-5-enolpyruvyl-6-hydroxy-3-cyclohexene-1-carboxylate synthase (Chlorobaculum tepidum (strain ATCC 49652 / DSM 12025 / NBRC 103806 / TLS) (Chlorobium tepidum)).